A 284-amino-acid chain; its full sequence is UTP--glucose-1-phosphate uridylyltransferase (284 aa).

It belongs to the UDPGP type 2 family.

It carries out the reaction alpha-D-glucose 1-phosphate + UTP + H(+) = UDP-alpha-D-glucose + diphosphate. The protein is UTP--glucose-1-phosphate uridylyltransferase (celA) of Komagataeibacter xylinus (Gluconacetobacter xylinus).